The sequence spans 62 residues: Large ribosomal subunit protein eL24 (62 aa).

The Zn(2+) site is built by C6, C9, C32, and C36. A C4-type zinc finger spans residues 6–36 (CYFCGKMLEPGTGKLYVKKDGSTYFMCSSKC).

The protein belongs to the eukaryotic ribosomal protein eL24 family. As to quaternary structure, part of the 50S ribosomal subunit. Forms a cluster with proteins L3 and L14. Zn(2+) is required as a cofactor.

Its function is as follows. Binds to the 23S rRNA. This is Large ribosomal subunit protein eL24 from Methanosarcina acetivorans (strain ATCC 35395 / DSM 2834 / JCM 12185 / C2A).